The following is a 452-amino-acid chain: Methionine aminopeptidase 2 (452 aa).

Residues 1–91 (MTGVTGTEDT…KNKKKKKKKI (91 aa)) form a disordered region. Over residues 8–38 (EDTKVIESKINELNIDKSKPEKTNKVNKSDD) the composition is skewed to basic and acidic residues. Residues 39-62 (VDNDDVDNDDNDDEDNDDDDDEIT) are compositionally biased toward acidic residues. Basic residues predominate over residues 74–91 (KKKKKNKNKNKKKKKKKI). Histidine 203 is a substrate binding site. Positions 223, 234, and 305 each coordinate a divalent metal cation. Substrate is bound at residue histidine 313. Positions 338 and 433 each coordinate a divalent metal cation.

This sequence belongs to the peptidase M24A family. Methionine aminopeptidase eukaryotic type 2 subfamily. The cofactor is Co(2+). Zn(2+) serves as cofactor. Requires Mn(2+) as cofactor. It depends on Fe(2+) as a cofactor.

The protein resides in the cytoplasm. It catalyses the reaction Release of N-terminal amino acids, preferentially methionine, from peptides and arylamides.. Cotranslationally removes the N-terminal methionine from nascent proteins. The N-terminal methionine is often cleaved when the second residue in the primary sequence is small and uncharged (Met-Ala-, Cys, Gly, Pro, Ser, Thr, or Val). The protein is Methionine aminopeptidase 2 of Candida dubliniensis (strain CD36 / ATCC MYA-646 / CBS 7987 / NCPF 3949 / NRRL Y-17841) (Yeast).